The sequence spans 129 residues: Small ribosomal subunit protein uS11c (129 aa).

It belongs to the universal ribosomal protein uS11 family. As to quaternary structure, part of the 30S ribosomal subunit.

The protein resides in the plastid. It is found in the chloroplast. This is Small ribosomal subunit protein uS11c from Cyanidium caldarium (Red alga).